The primary structure comprises 278 residues: Adenosylcobinamide-GDP ribazoletransferase (278 aa).

A run of 6 helical transmembrane segments spans residues 44–64 (GIGV…QLLL), 69–89 (FTPL…TGGF), 121–141 (AFGA…LALL), 161–181 (VCAA…VMIW), 204–224 (GGLA…SLAL), and 227–247 (INLI…LRFF).

Belongs to the CobS family. The cofactor is Mg(2+).

It localises to the cell inner membrane. The enzyme catalyses alpha-ribazole + adenosylcob(III)inamide-GDP = adenosylcob(III)alamin + GMP + H(+). The catalysed reaction is alpha-ribazole 5'-phosphate + adenosylcob(III)inamide-GDP = adenosylcob(III)alamin 5'-phosphate + GMP + H(+). It functions in the pathway cofactor biosynthesis; adenosylcobalamin biosynthesis; adenosylcobalamin from cob(II)yrinate a,c-diamide: step 7/7. In terms of biological role, joins adenosylcobinamide-GDP and alpha-ribazole to generate adenosylcobalamin (Ado-cobalamin). Also synthesizes adenosylcobalamin 5'-phosphate from adenosylcobinamide-GDP and alpha-ribazole 5'-phosphate. The chain is Adenosylcobinamide-GDP ribazoletransferase from Polaromonas naphthalenivorans (strain CJ2).